The following is a 137-amino-acid chain: Small ribosomal subunit protein uS12 (137 aa).

Disordered stretches follow at residues 1 to 21 and 34 to 57; these read MPTI…KSDS and VHTK…TPKK. Residue aspartate 102 is modified to 3-methylthioaspartic acid.

Belongs to the universal ribosomal protein uS12 family. As to quaternary structure, part of the 30S ribosomal subunit. Contacts proteins S8 and S17. May interact with IF1 in the 30S initiation complex.

In terms of biological role, with S4 and S5 plays an important role in translational accuracy. Interacts with and stabilizes bases of the 16S rRNA that are involved in tRNA selection in the A site and with the mRNA backbone. Located at the interface of the 30S and 50S subunits, it traverses the body of the 30S subunit contacting proteins on the other side and probably holding the rRNA structure together. The combined cluster of proteins S8, S12 and S17 appears to hold together the shoulder and platform of the 30S subunit. The sequence is that of Small ribosomal subunit protein uS12 from Streptococcus equi subsp. zooepidemicus (strain H70).